Here is a 101-residue protein sequence, read N- to C-terminus: NADH-quinone oxidoreductase subunit K (101 aa).

Transmembrane regions (helical) follow at residues 4–24 (LAHY…GIFL), 30–50 (IIIL…FVAF), and 61–81 (IFVF…LAIL).

This sequence belongs to the complex I subunit 4L family. NDH-1 is composed of 14 different subunits. Subunits NuoA, H, J, K, L, M, N constitute the membrane sector of the complex.

The protein resides in the cell inner membrane. The enzyme catalyses a quinone + NADH + 5 H(+)(in) = a quinol + NAD(+) + 4 H(+)(out). Functionally, NDH-1 shuttles electrons from NADH, via FMN and iron-sulfur (Fe-S) centers, to quinones in the respiratory chain. The immediate electron acceptor for the enzyme in this species is believed to be ubiquinone. Couples the redox reaction to proton translocation (for every two electrons transferred, four hydrogen ions are translocated across the cytoplasmic membrane), and thus conserves the redox energy in a proton gradient. The sequence is that of NADH-quinone oxidoreductase subunit K from Burkholderia cenocepacia (strain HI2424).